The primary structure comprises 345 residues: uncharacterized protein (345 aa).

PDZ GRASP-type domains are found at residues 27 to 112 (CGFR…WASI) and 118 to 207 (AIWH…HGVL). The GRASP stretch occupies residues 27–223 (CGFRVLKVEN…LSGPPPQPGD (197 aa)). A disordered region spans residues 229–345 (PMLGGPDHKV…APQNEELVKN (117 aa)). Basic and acidic residues predominate over residues 297 to 308 (KLSRELDHKTKD). Composition is skewed to polar residues over residues 309–318 (ASSTNDSQTT) and 328–338 (VNSTNDESAPQ).

It localises to the golgi apparatus membrane. This is an uncharacterized protein from Schizosaccharomyces pombe (strain 972 / ATCC 24843) (Fission yeast).